We begin with the raw amino-acid sequence, 612 residues long: Dihydroxy-acid dehydratase (612 aa).

Aspartate 81 serves as a coordination point for Mg(2+). Residue cysteine 122 participates in [2Fe-2S] cluster binding. Positions 123 and 124 each coordinate Mg(2+). Lysine 124 is modified (N6-carboxylysine). Residue cysteine 193 coordinates [2Fe-2S] cluster. Residue glutamate 489 participates in Mg(2+) binding. Residue serine 515 is the Proton acceptor of the active site.

It belongs to the IlvD/Edd family. In terms of assembly, homodimer. [2Fe-2S] cluster is required as a cofactor. The cofactor is Mg(2+).

The enzyme catalyses (2R)-2,3-dihydroxy-3-methylbutanoate = 3-methyl-2-oxobutanoate + H2O. It catalyses the reaction (2R,3R)-2,3-dihydroxy-3-methylpentanoate = (S)-3-methyl-2-oxopentanoate + H2O. It functions in the pathway amino-acid biosynthesis; L-isoleucine biosynthesis; L-isoleucine from 2-oxobutanoate: step 3/4. It participates in amino-acid biosynthesis; L-valine biosynthesis; L-valine from pyruvate: step 3/4. Its function is as follows. Functions in the biosynthesis of branched-chain amino acids. Catalyzes the dehydration of (2R,3R)-2,3-dihydroxy-3-methylpentanoate (2,3-dihydroxy-3-methylvalerate) into 2-oxo-3-methylpentanoate (2-oxo-3-methylvalerate) and of (2R)-2,3-dihydroxy-3-methylbutanoate (2,3-dihydroxyisovalerate) into 2-oxo-3-methylbutanoate (2-oxoisovalerate), the penultimate precursor to L-isoleucine and L-valine, respectively. The chain is Dihydroxy-acid dehydratase from Xanthomonas campestris pv. campestris (strain 8004).